The chain runs to 652 residues: Sodium-dependent phosphate transporter 2 (652 aa).

The Extracellular portion of the chain corresponds to 1–5 (MAMDE). The chain crosses the membrane as a helical span at residues 6 to 26 (YLWMVILGFIIAFILAFSVGA). Topologically, residues 27–46 (NDVANSFGTAVGSGVVTLRQ) are cytoplasmic. A helical membrane pass occupies residues 47–67 (ACILASIFETTGSVLLGAKVG). At 68–86 (ETIRKGIIDVNLYNETVET) the chain is on the extracellular side. Residue Asn-81 is glycosylated (N-linked (GlcNAc...) asparagine). The helical transmembrane segment at 87 to 107 (LMAGEVSAMVGSAVWQLIASF) threads the bilayer. At 108-109 (LR) the chain is on the cytoplasmic side. The chain crosses the membrane as a helical span at residues 110–130 (LPISGTHCIVGSTIGFSLVAI). At 131-142 (GTKGVQWMELVK) the chain is on the extracellular side. Residues 143-163 (IVASWFISPLLSGFMSGLLFV) form a helical membrane-spanning segment. At 164-190 (LIRIFILKKEDPVPNGLRALPVFYAAT) the chain is on the cytoplasmic side. Residues 191 to 211 (IAINVFSIMYTGAPVLGLVLP) traverse the membrane as a helical segment. Topologically, residues 212–213 (MW) are extracellular. The chain crosses the membrane as a helical span at residues 214-234 (AIALISFGVALLFAFFVWLFV). At 235 to 482 (CPWMRRKITG…EEKEEKDAPE (248 aa)) the chain is on the cytoplasmic side. Ser-253, Ser-256, Ser-259, and Ser-268 each carry phosphoserine. The interval 273-307 (ELPGAKANDDSTIPLTGAAGETLGTSEGTSAGSHP) is disordered. A compositionally biased stretch (polar residues) spans 295–304 (LGTSEGTSAG). 2 positions are modified to phosphoserine: Ser-316 and Ser-385. Positions 458-477 (SELADPDQPREDPAEEEKEE) are disordered. A helical transmembrane segment spans residues 483–503 (VHLLFHFLQVLTACFGSFAHG). The Extracellular segment spans residues 504–530 (GNDVSNAIGPLVALWLIYKQGGVTQEA). The helical transmembrane segment at 531-551 (ATPVWLLFYGGVGICTGLWVW) threads the bilayer. The Cytoplasmic portion of the chain corresponds to 552–571 (GRRVIQTMGKDLTPITPSSG). Residues 572–586 (FTIELASAFTVVIAS) traverse the membrane as a helical segment. The Extracellular portion of the chain corresponds to 587–593 (NIGLPVS). The helical transmembrane segment at 594-609 (TTHCKVGSVVAVGWIR) threads the bilayer. Over 610–621 (SRKAVDWRLFRN) the chain is Cytoplasmic. A helical transmembrane segment spans residues 622-642 (IFVAWFVTVPVAGLFSAAVMA). Residues 643–652 (LLMYGILPYV) are Extracellular-facing.

Belongs to the inorganic phosphate transporter (PiT) (TC 2.A.20) family. As to quaternary structure, homodimer. As to expression, ubiquitously expressed.

The protein localises to the cell membrane. Its subcellular location is the apical cell membrane. The catalysed reaction is 2 Na(+)(out) + phosphate(out) = 2 Na(+)(in) + phosphate(in). Functionally, sodium-phosphate symporter which preferentially transports the monovalent form of phosphate with a stoichiometry of two sodium ions per phosphate ion. Plays a critical role in the determination of bone quality and strength by providing phosphate for bone mineralization. Required to maintain normal cerebrospinal fluid phosphate levels. Mediates phosphate-induced calcification of vascular smooth muscle cells (VCMCs) and can functionally compensate for loss of SLC20A1 in VCMCs. (Microbial infection) Functions as a retroviral receptor and confers human cells susceptibility to infection to amphotropic murine leukemia virus (A-MuLV), 10A1 murine leukemia virus (10A1 MLV) and some feline leukemia virus subgroup B (FeLV-B) variants. This is Sodium-dependent phosphate transporter 2 (SLC20A2) from Homo sapiens (Human).